We begin with the raw amino-acid sequence, 306 residues long: Protein translocase subunit SecF (306 aa).

6 helical membrane passes run 17 to 37 (AFAV…TKGI), 134 to 154 (GLGM…RFQW), 158 to 178 (LGAI…LSFF), 185 to 205 (TVLA…IVIF), 232 to 254 (LLRT…FFGG), and 268 to 288 (VMAG…WLNL).

Belongs to the SecD/SecF family. SecF subfamily. Forms a complex with SecD. Part of the essential Sec protein translocation apparatus which comprises SecA, SecYEG and auxiliary proteins SecDF-YajC and YidC.

It is found in the cell inner membrane. Its function is as follows. Part of the Sec protein translocase complex. Interacts with the SecYEG preprotein conducting channel. SecDF uses the proton motive force (PMF) to complete protein translocation after the ATP-dependent function of SecA. In Pseudomonas aeruginosa (strain ATCC 15692 / DSM 22644 / CIP 104116 / JCM 14847 / LMG 12228 / 1C / PRS 101 / PAO1), this protein is Protein translocase subunit SecF.